The following is a 3681-amino-acid chain: E3 ubiquitin-protein ligase UPL1 (3681 aa).

The segment covering 882–891 (DEKKSVDRGS) has biased composition (basic and acidic residues). The interval 882–912 (DEKKSVDRGSDNSVSASSSTAERESDEDSSN) is disordered. Positions 892–901 (DNSVSASSST) are enriched in low complexity. The UBA domain maps to 1269 to 1310 (QLDESIVGMIVEMGFSRSRAEIALRRVGTNSVEMAMDWLFTN). The UIM domain maps to 1316-1335 (QEDDELAQALALSLGNSSET). 10 disordered regions span residues 1332 to 1358 (SSET…KEPP), 1768 to 1802 (MEVD…KAEI), 2015 to 2094 (EQLK…MRIE), 2125 to 2151 (ENRA…EDAD), 2253 to 2287 (RQTG…TASV), 2401 to 2435 (NTTE…QSEE), 2483 to 2505 (PLPL…DGAP), 2537 to 2606 (IAPP…APEV), 2975 to 3003 (SPSS…DAES), and 3228 to 3254 (TAGE…KTDG). Composition is skewed to basic and acidic residues over residues 1336–1345 (PKLEDTEKPV), 1782–1802 (KVGE…KAEI), and 2017–2037 (LKSE…HDSH). A compositionally biased stretch (polar residues) spans 2038-2087 (GNSTETEADELNQNNSSLQQVTDAAGNGQEQAQVSSQSAGERGSSQTQAM). A compositionally biased stretch (acidic residues) spans 2130 to 2151 (DDVDDDMGDEGEDDEGDDEDAD). A compositionally biased stretch (basic and acidic residues) spans 2253-2265 (RQTGRSSLDRSGS). Residues 2277 to 2287 (RPSQTGNTASV) show a composition bias toward polar residues. Ser2598 is subject to Phosphoserine. The span at 2982-3002 (EKLENKPVGEEASSETRKDAE) shows a compositional bias: basic and acidic residues. Positions 3237–3247 (AHGSSSKTSVD) are enriched in polar residues. In terms of domain architecture, HECT spans 3340-3681 (SPQDLKGRLN…HEASEGFGFA (342 aa)). Residue Cys3648 is the Glycyl thioester intermediate of the active site.

The protein belongs to the UPL family. TOM1/PTR1 subfamily. Widely expressed. Expressed in root, stem, cauline and rosette leaf, seedling and flower (at protein level).

The catalysed reaction is S-ubiquitinyl-[E2 ubiquitin-conjugating enzyme]-L-cysteine + [acceptor protein]-L-lysine = [E2 ubiquitin-conjugating enzyme]-L-cysteine + N(6)-ubiquitinyl-[acceptor protein]-L-lysine.. It participates in protein modification; protein ubiquitination. Probable E3 ubiquitin-protein ligase which mediates ubiquitination and subsequent proteasomal degradation of target proteins. This chain is E3 ubiquitin-protein ligase UPL1 (UPL1), found in Arabidopsis thaliana (Mouse-ear cress).